A 253-amino-acid chain; its full sequence is MRLVIATCSVDYVGRLTAHLPKATRLLMVKADGSVSVHADDRAYKPLNWMTPPCTLTVHPIAIDDPDTDFTDGSSVGNSEEQGTDGSAHTAHEEELWVVENKKGEQLRITVHDKISDTTYDLGEDPGLTKDGVEAHLQELLAQHPEALGEGFTLVRREYPTPIGPVDILTRDASGKTVAVEVKRRGGIDGVEQLTRYVELLNRDEILAPVQGLFAAQEIKPQARTLAEDRGFTCVTVDYDELRGTPSQELRLF.

Residues 63 to 91 (IDDPDTDFTDGSSVGNSEEQGTDGSAHTA) form a disordered region. Residues 71 to 87 (TDGSSVGNSEEQGTDGS) show a composition bias toward polar residues.

The protein belongs to the NucS endonuclease family.

The protein resides in the cytoplasm. Cleaves both 3' and 5' ssDNA extremities of branched DNA structures. This chain is Endonuclease NucS, found in Corynebacterium kroppenstedtii (strain DSM 44385 / JCM 11950 / CIP 105744 / CCUG 35717).